The sequence spans 436 residues: tRNA-2-methylthio-N(6)-dimethylallyladenosine synthase (436 aa).

In terms of domain architecture, MTTase N-terminal spans 5–121 (RKLFIKTYGC…LPDMLERTEG (117 aa)). Residues Cys14, Cys50, Cys84, Cys158, Cys162, and Cys165 each contribute to the [4Fe-4S] cluster site. In terms of domain architecture, Radical SAM core spans 144–374 (ATRGPAAFLT…TEQQRAAQMA (231 aa)). The TRAM domain occupies 373–435 (MAMVGREVGV…PNSLAGERLG (63 aa)).

The protein belongs to the methylthiotransferase family. MiaB subfamily. As to quaternary structure, monomer. It depends on [4Fe-4S] cluster as a cofactor.

The protein resides in the cytoplasm. It catalyses the reaction N(6)-dimethylallyladenosine(37) in tRNA + (sulfur carrier)-SH + AH2 + 2 S-adenosyl-L-methionine = 2-methylsulfanyl-N(6)-dimethylallyladenosine(37) in tRNA + (sulfur carrier)-H + 5'-deoxyadenosine + L-methionine + A + S-adenosyl-L-homocysteine + 2 H(+). In terms of biological role, catalyzes the methylthiolation of N6-(dimethylallyl)adenosine (i(6)A), leading to the formation of 2-methylthio-N6-(dimethylallyl)adenosine (ms(2)i(6)A) at position 37 in tRNAs that read codons beginning with uridine. This Cereibacter sphaeroides (strain ATCC 17023 / DSM 158 / JCM 6121 / CCUG 31486 / LMG 2827 / NBRC 12203 / NCIMB 8253 / ATH 2.4.1.) (Rhodobacter sphaeroides) protein is tRNA-2-methylthio-N(6)-dimethylallyladenosine synthase.